Here is a 629-residue protein sequence, read N- to C-terminus: tRNA uridine 5-carboxymethylaminomethyl modification enzyme MnmG (629 aa).

FAD is bound by residues 13-18 (GGGHAG), Val125, and Ser180. An NAD(+)-binding site is contributed by 273-287 (GPRYCPSIEDKVMRF). An FAD-binding site is contributed by Gln370.

Belongs to the MnmG family. As to quaternary structure, homodimer. Heterotetramer of two MnmE and two MnmG subunits. FAD is required as a cofactor.

It is found in the cytoplasm. Functionally, NAD-binding protein involved in the addition of a carboxymethylaminomethyl (cmnm) group at the wobble position (U34) of certain tRNAs, forming tRNA-cmnm(5)s(2)U34. The sequence is that of tRNA uridine 5-carboxymethylaminomethyl modification enzyme MnmG from Photobacterium profundum (strain SS9).